Consider the following 357-residue polypeptide: DNA integrity scanning protein DisA (357 aa).

The 139-residue stretch at 8–146 (VKSMINILQL…GNLRYTLKDI (139 aa)) folds into the DAC domain. Residues Gly75, Leu93, and 106–110 (MRHRT) contribute to the ATP site.

The protein belongs to the DisA family. As to quaternary structure, homooctamer. Mg(2+) is required as a cofactor.

The enzyme catalyses 2 ATP = 3',3'-c-di-AMP + 2 diphosphate. In terms of biological role, participates in a DNA-damage check-point that is active prior to asymmetric division when DNA is damaged. DisA forms globular foci that rapidly scan along the chromosomes during sporulation, searching for lesions. When a lesion is present, DisA pauses at the lesion site. This triggers a cellular response that culminates in a temporary block in sporulation initiation. Its function is as follows. Also has diadenylate cyclase activity, catalyzing the condensation of 2 ATP molecules into cyclic di-AMP (c-di-AMP). c-di-AMP acts as a signaling molecule that couples DNA integrity with progression of sporulation. The rise in c-di-AMP level generated by DisA while scanning the chromosome, operates as a positive signal that advances sporulation; upon encountering a lesion, the DisA focus arrests at the damaged site and halts c-di-AMP synthesis. In Bacillus mycoides (strain KBAB4) (Bacillus weihenstephanensis), this protein is DNA integrity scanning protein DisA.